The primary structure comprises 403 residues: Lissencephaly-1 homolog 1 (403 aa).

Positions 7 to 38 (QRDELNQAIHQYLLISYQQSAQLFKTEAAVKD) constitute a LisH domain. Residues 51-87 (NSIVRLSKRVITLEQQVEQLNEQLAQAQAGKIQFNKS) adopt a coiled-coil conformation. 7 WD repeats span residues 103-142 (GHRA…FEKT), 145-184 (GHTS…CVKT), 187-226 (GHEH…CKKT), 229-270 (EHQE…HQLS), 271-327 (GHEH…NLFT), 330-369 (GHDN…QKKK), and 373-403 (AHDK…WLLS).

This sequence belongs to the WD repeat LIS1/nudF family.

The protein resides in the cytoplasm. It localises to the cytoskeleton. Its subcellular location is the microtubule organizing center. It is found in the centrosome. Its function is as follows. Positively regulates the activity of the minus-end directed microtubule motor protein dynein. May enhance dynein-mediated microtubule sliding by targeting dynein to the microtubule plus end. Required for several dynein- and microtubule-dependent processes. The protein is Lissencephaly-1 homolog 1 of Paramecium tetraurelia.